The sequence spans 871 residues: Bifunctional cordycepin biosynthesis cluster protein 3 (871 aa).

The protein operates within secondary metabolite biosynthesis. Its function is as follows. Nucleoside/nucleotide kinase; part of the gene cluster that mediates the biosynthesis of cordycepin (COR) and pentostatin (PTN), two adenosine analogs with related bioactivity profiles as both mimic adenosine and can inhibit some of the processes that are adenosine dependent. Within the pathway, cns3 catalyzes both the first step of cordycepin biosynthesis by phosphorylating adenosine into 3'-AMP via its kinase activity and the conversion of adenosine into pentostatin via its ATP phosphoribosyltransferase activity. The first step of cordycepin biosynthesis involves hydroxyl phosphorylation of the 3'-OH position on adenosine to produce adenosine-3'-monophosphate (3'-AMP), catalyzed by kinase activity of cns3. Next, 3'-AMP is dephosphorylated to 2'-carbonyl-3'-deoxyadenosine (2'-C-3'-dA) by cns2, which is finally converted to cordycepin (3'-deoxyadenosine) by the oxidoreductase cns1. The protein is Bifunctional cordycepin biosynthesis cluster protein 3 of Cordyceps militaris (strain CM01) (Caterpillar fungus).